The sequence spans 334 residues: Nucleoid-associated protein SG1574 (334 aa).

This sequence belongs to the YejK family.

Its subcellular location is the cytoplasm. The protein resides in the nucleoid. The chain is Nucleoid-associated protein SG1574 from Sodalis glossinidius (strain morsitans).